The primary structure comprises 505 residues: Maturase K (505 aa).

This sequence belongs to the intron maturase 2 family. MatK subfamily.

The protein localises to the plastid. It localises to the chloroplast. Its function is as follows. Usually encoded in the trnK tRNA gene intron. Probably assists in splicing its own and other chloroplast group II introns. The sequence is that of Maturase K from Ulmus parvifolia (Chinese elm).